The sequence spans 445 residues: Phosphoglucosamine mutase (445 aa).

The Phosphoserine intermediate role is filled by S104. The Mg(2+) site is built by S104, D243, D245, and D247. S104 carries the post-translational modification Phosphoserine.

Belongs to the phosphohexose mutase family. Requires Mg(2+) as cofactor. Post-translationally, activated by phosphorylation.

The enzyme catalyses alpha-D-glucosamine 1-phosphate = D-glucosamine 6-phosphate. Its function is as follows. Catalyzes the conversion of glucosamine-6-phosphate to glucosamine-1-phosphate. The polypeptide is Phosphoglucosamine mutase (Neisseria subflava).